We begin with the raw amino-acid sequence, 451 residues long: 1,3-beta-glucanosyltransferase PGA4 (451 aa).

The signal sequence occupies residues 1 to 18; the sequence is MLFRSLVTYLSLVSSVLS. (1,3-beta-D-glucosyl)n is bound at residue Tyr-81. An N-linked (GlcNAc...) asparagine glycan is attached at Asn-88. Residues 108–116, Asn-151, Glu-152, and Arg-198 each bind (1,3-beta-D-glucosyl)n; that span reads NTPHSSITR. Residue Glu-152 is the Proton donor of the active site. N-linked (GlcNAc...) asparagine glycosylation occurs at Asn-245. The active-site Nucleophile is Glu-254. Tyr-286 contacts (1,3-beta-D-glucosyl)n. Positions 316-336 are disordered; sequence SQFEKTKNPSGDGGYLKSTGG. 3 N-linked (GlcNAc...) asparagine glycosylation sites follow: Asn-347, Asn-394, and Asn-422. The interval 395 to 427 is disordered; sequence YTSSITASSRASPSQTSQVSSSSATSANSTSSK. Over residues 396–426 the composition is skewed to low complexity; the sequence is TSSITASSRASPSQTSQVSSSSATSANSTSS. A lipid anchor (GPI-anchor amidated aspartate) is attached at Asp-430. The propeptide at 431–451 is removed in mature form; it reads AAVEGAGFLSVIALAAGIALL.

This sequence belongs to the glycosyl hydrolase 72 family. The GPI-anchor is attached to the protein in the endoplasmic reticulum and serves to target the protein to the cell surface. There, the glucosamine-inositol phospholipid moiety is cleaved off and the GPI-modified mannoprotein is covalently attached via its lipidless GPI glycan remnant to the 1,6-beta-glucan of the outer cell wall layer.

It localises to the secreted. It is found in the cell wall. The protein resides in the membrane. Functionally, splits internally a 1,3-beta-glucan molecule and transfers the newly generated reducing end (the donor) to the non-reducing end of another 1,3-beta-glucan molecule (the acceptor) forming a 1,3-beta linkage, resulting in the elongation of 1,3-beta-glucan chains in the cell wall. Involved in cell wall biosynthesis and morphogenesis. Plays a key role in virulence. This is 1,3-beta-glucanosyltransferase PGA4 (PGA4) from Candida albicans (strain SC5314 / ATCC MYA-2876) (Yeast).